We begin with the raw amino-acid sequence, 157 residues long: 6,7-dimethyl-8-ribityllumazine synthase (157 aa).

5-amino-6-(D-ribitylamino)uracil-binding positions include F23, 57-59 (AFE), and 81-83 (AVI). 86–87 (AT) provides a ligand contact to (2S)-2-hydroxy-3-oxobutyl phosphate. Catalysis depends on H89, which acts as the Proton donor. Residue F114 coordinates 5-amino-6-(D-ribitylamino)uracil. R128 provides a ligand contact to (2S)-2-hydroxy-3-oxobutyl phosphate.

Belongs to the DMRL synthase family.

It carries out the reaction (2S)-2-hydroxy-3-oxobutyl phosphate + 5-amino-6-(D-ribitylamino)uracil = 6,7-dimethyl-8-(1-D-ribityl)lumazine + phosphate + 2 H2O + H(+). Its pathway is cofactor biosynthesis; riboflavin biosynthesis; riboflavin from 2-hydroxy-3-oxobutyl phosphate and 5-amino-6-(D-ribitylamino)uracil: step 1/2. Functionally, catalyzes the formation of 6,7-dimethyl-8-ribityllumazine by condensation of 5-amino-6-(D-ribitylamino)uracil with 3,4-dihydroxy-2-butanone 4-phosphate. This is the penultimate step in the biosynthesis of riboflavin. In Desulforapulum autotrophicum (strain ATCC 43914 / DSM 3382 / VKM B-1955 / HRM2) (Desulfobacterium autotrophicum), this protein is 6,7-dimethyl-8-ribityllumazine synthase.